The following is a 150-amino-acid chain: FAD synthase (150 aa).

ATP contacts are provided by residues 20-21, 25-28, and Asp103; these read TF and HPGH.

This sequence belongs to the archaeal FAD synthase family. In terms of assembly, homodimer. Requires a divalent metal cation as cofactor.

The catalysed reaction is FMN + ATP + H(+) = FAD + diphosphate. Its pathway is cofactor biosynthesis; FAD biosynthesis; FAD from FMN: step 1/1. Its function is as follows. Catalyzes the transfer of the AMP portion of ATP to flavin mononucleotide (FMN) to produce flavin adenine dinucleotide (FAD) coenzyme. This Methanohalobium evestigatum (strain ATCC BAA-1072 / DSM 3721 / NBRC 107634 / OCM 161 / Z-7303) protein is FAD synthase.